The primary structure comprises 277 residues: Phosphatidylglycerol--prolipoprotein diacylglyceryl transferase (277 aa).

4 helical membrane passes run 16–36, 58–78, 93–113, and 119–139; these read LGPI…LFGW, FLTW…VLFY, IWSG…AILL, and GFSP…GLFL. Residue Arg141 coordinates a 1,2-diacyl-sn-glycero-3-phospho-(1'-sn-glycerol). The next 3 membrane-spanning stretches (helical) occupy residues 182-202, 207-227, and 239-259; these read AALE…KPAV, GTLS…GEVF, and FGVT…LWIL.

The protein belongs to the Lgt family.

Its subcellular location is the cell inner membrane. The enzyme catalyses L-cysteinyl-[prolipoprotein] + a 1,2-diacyl-sn-glycero-3-phospho-(1'-sn-glycerol) = an S-1,2-diacyl-sn-glyceryl-L-cysteinyl-[prolipoprotein] + sn-glycerol 1-phosphate + H(+). It participates in protein modification; lipoprotein biosynthesis (diacylglyceryl transfer). Its function is as follows. Catalyzes the transfer of the diacylglyceryl group from phosphatidylglycerol to the sulfhydryl group of the N-terminal cysteine of a prolipoprotein, the first step in the formation of mature lipoproteins. The protein is Phosphatidylglycerol--prolipoprotein diacylglyceryl transferase of Rhodospirillum centenum (strain ATCC 51521 / SW).